The chain runs to 503 residues: Protein O-glucosyltransferase 3 (503 aa).

The signal sequence occupies residues M1–G19. A Filamin repeat occupies G19–G129. N-linked (GlcNAc...) asparagine glycans are attached at residues N56 and N302. The short motif at R500–L503 is the Prevents secretion from ER element.

The protein belongs to the KDELC family.

The protein localises to the endoplasmic reticulum lumen. It catalyses the reaction L-seryl-[EGF-like domain protein] + UDP-alpha-D-glucose = 3-O-(beta-D-glucosyl)-L-seryl-[EGF-like domain protein] + UDP + H(+). It carries out the reaction L-seryl-[EGF-like domain protein] + UDP-alpha-D-xylose = 3-O-(beta-D-xylosyl)-L-seryl-[EGF-like domain protein] + UDP + H(+). The protein operates within protein modification; protein glycosylation. Protein glucosyltransferase that catalyzes the transfer of glucose from UDP-glucose to a serine residue within the consensus sequence peptide C-X-N-T-X-G-S-F-X-C. Can also catalyze the transfer of xylose from UDP-xylose but less efficiently. Specifically targets extracellular EGF repeats of proteins such as NOTCH1, NOTCH3, FBN1, FBN2 and LTBP1. May regulate the transport of NOTCH1 and NOTCH3 to the plasma membrane and thereby the Notch signaling pathway. The protein is Protein O-glucosyltransferase 3 (Poglut3) of Mus musculus (Mouse).